Here is a 255-residue protein sequence, read N- to C-terminus: Putative enoyl-CoA hydratase/isomerase YhaR (255 aa).

2 helical membrane passes run 96–116 (VTIAAIHGAAAGLGLSLALCA) and 126–146 (VLAMNFIGIGLVPDGGGHYLL).

This sequence belongs to the enoyl-CoA hydratase/isomerase family.

The protein localises to the cell membrane. The polypeptide is Putative enoyl-CoA hydratase/isomerase YhaR (yhaR) (Bacillus subtilis (strain 168)).